A 189-amino-acid polypeptide reads, in one-letter code: Large ribosomal subunit protein bL9 (189 aa).

It belongs to the bacterial ribosomal protein bL9 family.

In terms of biological role, binds to the 23S rRNA. The polypeptide is Large ribosomal subunit protein bL9 (Brucella canis (strain ATCC 23365 / NCTC 10854 / RM-666)).